The chain runs to 750 residues: Sulfhydryl oxidase 1 (750 aa).

The signal sequence occupies residues 1 to 32 (MGRCNRGSGPPSSLLLLLLLLLWLLAVPGASA). A Thioredoxin domain is found at 39–159 (YSPSDPLTLL…RERLIDALES (121 aa)). Catalysis depends on nucleophile residues C73 and C76. Disulfide bonds link C73–C76 and C104–C113. N-linked (GlcNAc...) asparagine glycans are attached at residues N133 and N246. The cysteines at positions 396 and 408 are disulfide-linked. Residues 399–506 (SEPHFRGFPC…EDPQFPKVQW (108 aa)) enclose the ERV/ALR sulfhydryl oxidase domain. FAD contacts are provided by R404, W411, and H415. S429 carries the phosphoserine modification. Residues C452 and C455 are joined by a disulfide bond. FAD-binding positions include D454, H458, 481-488 (WSSHNRVN), K503, and W506. Cysteines 512 and 515 form a disulfide. N-linked (GlcNAc...) asparagine glycosylation is present at N578. Residues 578–645 (NSTVDLGKPE…REQPRGQWHL (68 aa)) are disordered. Basic and acidic residues predominate over residues 624–639 (PPEHMAELQTNEREQP). Residues 713-733 (ISLCVGLYSLSFMGLLAMYAY) traverse the membrane as a helical segment.

The protein belongs to the quiescin-sulfhydryl oxidase (QSOX) family. As to quaternary structure, monomer. It depends on FAD as a cofactor. Post-translationally, N-glycosylated. O-glycosylated on Thr and Ser residues.

Its subcellular location is the golgi apparatus membrane. The protein localises to the secreted. The catalysed reaction is 2 R'C(R)SH + O2 = R'C(R)S-S(R)CR' + H2O2. In terms of biological role, catalyzes the oxidation of sulfhydryl groups in peptide and protein thiols to disulfides with the reduction of oxygen to hydrogen peroxide. Plays a role in disulfide bond formation in a variety of extracellular proteins. In fibroblasts, required for normal incorporation of laminin into the extracellular matrix, and thereby for normal cell-cell adhesion and cell migration. This is Sulfhydryl oxidase 1 (QSOX1) from Pongo abelii (Sumatran orangutan).